The primary structure comprises 173 residues: Alpha-crystallin A chain (173 aa).

N-acetylmethionine is present on Met-1. The segment at 1-63 (MDIAIQHPWF…RTVLDSGISE (63 aa)) is required for complex formation with BFSP1 and BFSP2. The residue at position 6 (Gln-6) is a Deamidated glutamine; partial. Ser-45 is subject to Phosphoserine. Residue Gln-50 is modified to Deamidated glutamine; partial. Positions 52–162 (LFRTVLDSGI…GHSERAIPVS (111 aa)) constitute a sHSP domain. N6-acetyllysine is present on residues Lys-70 and Lys-99. Residue His-100 participates in Zn(2+) binding. Residue Asn-101 is modified to Deamidated asparagine; partial. The Zn(2+) site is built by Glu-102 and His-107. Ser-122 is modified (phosphoserine). The residue at position 123 (Asn-123) is a Deamidated asparagine; partial. Positions 144–173 (PKVPSGMDAGHSERAIPVSREEKPSSAPSS) are disordered. Residues 153–167 (GHSERAIPVSREEKP) are compositionally biased toward basic and acidic residues. Position 154 (His-154) interacts with Zn(2+). O-linked (GlcNAc) serine glycosylation is present at Ser-162.

This sequence belongs to the small heat shock protein (HSP20) family. In terms of assembly, heteromer composed of three CRYAA and one CRYAB subunits. Inter-subunit bridging via zinc ions enhances stability, which is crucial as there is no protein turn over in the lens. Can also form homodimers and homotetramers (dimers of dimers) which serve as the building blocks of homooligomers. Within homooligomers, the zinc-binding motif is created from residues of 3 different molecules. His-100 and Glu-102 from one molecule are ligands of the zinc ion, and His-107 and His-154 residues from additional molecules complete the site with tetrahedral coordination geometry. Part of a complex required for lens intermediate filament formation composed of BFSP1, BFSP2 and CRYAA. Post-translationally, acetylation at Lys-70 may increase chaperone activity. In terms of processing, undergoes age-dependent proteolytical cleavage at the C-terminus.

It localises to the cytoplasm. Its subcellular location is the nucleus. In terms of biological role, contributes to the transparency and refractive index of the lens. Acts as a chaperone, preventing aggregation of various proteins under a wide range of stress conditions. Required for the correct formation of lens intermediate filaments as part of a complex composed of BFSP1, BFSP2 and CRYAA. This is Alpha-crystallin A chain (CRYAA) from Melursus ursinus (Sloth bear).